The sequence spans 139 residues: Peptide methionine sulfoxide reductase MsrB (139 aa).

The region spanning 9–131 (TPSDNTELTE…NSASLSFIDD (123 aa)) is the MsrB domain. Zn(2+) contacts are provided by Cys-48, Cys-51, Cys-97, and Cys-100. Residue Cys-120 is the Nucleophile of the active site.

It belongs to the MsrB Met sulfoxide reductase family. It depends on Zn(2+) as a cofactor.

The enzyme catalyses L-methionyl-[protein] + [thioredoxin]-disulfide + H2O = L-methionyl-(R)-S-oxide-[protein] + [thioredoxin]-dithiol. This chain is Peptide methionine sulfoxide reductase MsrB, found in Pectobacterium carotovorum subsp. carotovorum (strain PC1).